A 968-amino-acid chain; its full sequence is RNA polymerase-associated protein RapA (968 aa).

Residues Glu164 to Asp334 form the Helicase ATP-binding domain. Residue Asp177 to Thr184 coordinates ATP. A DEAH box motif is present at residues Asp280–His283. The region spanning Arg490–Asp644 is the Helicase C-terminal domain.

Belongs to the SNF2/RAD54 helicase family. RapA subfamily. In terms of assembly, interacts with the RNAP. Has a higher affinity for the core RNAP than for the holoenzyme. Its ATPase activity is stimulated by binding to RNAP.

Transcription regulator that activates transcription by stimulating RNA polymerase (RNAP) recycling in case of stress conditions such as supercoiled DNA or high salt concentrations. Probably acts by releasing the RNAP, when it is trapped or immobilized on tightly supercoiled DNA. Does not activate transcription on linear DNA. Probably not involved in DNA repair. This is RNA polymerase-associated protein RapA from Yersinia pseudotuberculosis serotype O:1b (strain IP 31758).